The primary structure comprises 159 residues: Phosphopantetheine adenylyltransferase (159 aa).

Ser8 is a binding site for substrate. ATP-binding positions include 8 to 9 (SF) and His16. The substrate site is built by Lys40, Val72, and Arg86. Residues 87-89 (GVR), Glu97, and 122-128 (YAALRSS) contribute to the ATP site.

Belongs to the bacterial CoaD family. As to quaternary structure, homohexamer. Mg(2+) is required as a cofactor.

It localises to the cytoplasm. The catalysed reaction is (R)-4'-phosphopantetheine + ATP + H(+) = 3'-dephospho-CoA + diphosphate. It functions in the pathway cofactor biosynthesis; coenzyme A biosynthesis; CoA from (R)-pantothenate: step 4/5. In terms of biological role, reversibly transfers an adenylyl group from ATP to 4'-phosphopantetheine, yielding dephospho-CoA (dPCoA) and pyrophosphate. The chain is Phosphopantetheine adenylyltransferase from Treponema pallidum (strain Nichols).